The chain runs to 524 residues: Homeobox protein engrailed-like SMOX-2 (524 aa).

Positions 194–218 (SSSSSSSSSSSSSSSSSSCSTNSSS) are disordered. Positions 423–482 (LKRPRTSFTVPQLKRLSQEFEKNRYLDELRRKKLATELDLRESQVKIWFQNKRAKTKKAS) form a DNA-binding region, homeobox.

Belongs to the engrailed homeobox family.

The protein localises to the nucleus. The polypeptide is Homeobox protein engrailed-like SMOX-2 (SMOX-2) (Schistosoma mansoni (Blood fluke)).